Consider the following 222-residue polypeptide: MKRDGGRLLPRERMIKAGPESLSVEELVAIVLRTGKKGKHVLELSKDLLERFDGSLIKLSNASLEEIASVEGVGMVKAITLKAALELGKRLHRELERIPEKLDSSVKVYKYCQEMVYLEREIVKVICLDTKLNVIGENTLTVGTSDRSLIHPRDVFRTAIRANASGVIVVHNHPSGDPTPSKEDRLITERLKQAGEILGVSLVDHVIVSRRGYFSFREEGEL.

The MPN domain occupies 101–222 (KLDSSVKVYK…YFSFREEGEL (122 aa)). The Zn(2+) site is built by H171, H173, and D184. A JAMM motif motif is present at residues 171–184 (HNHPSGDPTPSKED).

This sequence belongs to the UPF0758 family.

The chain is UPF0758 protein TM_1557 from Thermotoga maritima (strain ATCC 43589 / DSM 3109 / JCM 10099 / NBRC 100826 / MSB8).